Consider the following 187-residue polypeptide: Ribosome-recycling factor (187 aa).

This sequence belongs to the RRF family.

The protein resides in the cytoplasm. In terms of biological role, responsible for the release of ribosomes from messenger RNA at the termination of protein biosynthesis. May increase the efficiency of translation by recycling ribosomes from one round of translation to another. In Lactiplantibacillus plantarum (strain ATCC BAA-793 / NCIMB 8826 / WCFS1) (Lactobacillus plantarum), this protein is Ribosome-recycling factor.